An 827-amino-acid polypeptide reads, in one-letter code: NT-3 growth factor receptor (827 aa).

Positions 1 to 31 (MDVSLCPTKCTFWRVFLLWSIWGDYLLSVLA) are cleaved as a signal peptide. Cystine bridges form between cysteine 32–cysteine 38 and cysteine 36–cysteine 45. Residues 32–430 (CPANCLCSKT…ITVTHKPEED (399 aa)) are Extracellular-facing. 3 N-linked (GlcNAc...) asparagine glycosylation sites follow: asparagine 68, asparagine 72, and asparagine 79. LRR repeat units lie at residues 104–125 (GLQR…AFAK) and 128–149 (HLRY…LFQT). The LRRCT domain occupies 160–209 (NPFNCSCDIRWIQLWQEKGEANLQSQQLHCMNLDTAVILLRNMNITQCDL). The N-linked (GlcNAc...) asparagine glycan is linked to asparagine 163. 2 disulfides stabilise this stretch: cysteine 164–cysteine 189 and cysteine 166–cysteine 207. N-linked (GlcNAc...) asparagine glycans are attached at residues asparagine 203, asparagine 218, asparagine 232, asparagine 259, asparagine 267, asparagine 272, and asparagine 294. 2 consecutive Ig-like C2-type domains span residues 210–300 (PEIS…VLLT) and 319–382 (HCIA…VATN). An intrachain disulfide couples cysteine 231 to cysteine 284. Cysteines 320 and 362 form a disulfide. N-linked (GlcNAc...) asparagine glycans are attached at residues asparagine 375 and asparagine 388. The chain crosses the membrane as a helical span at residues 431-455 (TFGVSIAVGLAAFACVLLVVLFIMI). The Cytoplasmic portion of the chain corresponds to 456 to 827 (NKYGRRSKFG…ATPIYLDILG (372 aa)). Tyrosine 518 bears the Phosphotyrosine; by autocatalysis mark. The region spanning 540–812 (IVLKRELGEG…LNIKEIYKIL (273 aa)) is the Protein kinase domain. ATP is bound by residues 546–554 (LGEGAFGKV) and lysine 574. Aspartate 681 acts as the Proton acceptor in catalysis. Phosphotyrosine; by autocatalysis is present on residues tyrosine 707, tyrosine 711, tyrosine 712, and tyrosine 822.

The protein belongs to the protein kinase superfamily. Tyr protein kinase family. Insulin receptor subfamily. Exists in a dynamic equilibrium between monomeric (low affinity) and dimeric (high affinity) structures. Interacts with PTPRS. Ligand-mediated auto-phosphorylation.

The protein resides in the membrane. The enzyme catalyses L-tyrosyl-[protein] + ATP = O-phospho-L-tyrosyl-[protein] + ADP + H(+). Its function is as follows. Receptor tyrosine kinase involved in nervous system and probably heart development. Upon binding of its ligand NTF3/neurotrophin-3, NTRK3 autophosphorylates and activates different signaling pathways, including the phosphatidylinositol 3-kinase/AKT and the MAPK pathways, that control cell survival and differentiation. The KT and KD isoforms fail to stimulate transformation, process outgrowth or survival. Isoform KI25 exhibits tyrosine phosphorylation in the absence of ligand and is unable to mediate survival of neuronal cells. The polypeptide is NT-3 growth factor receptor (NTRK3) (Gallus gallus (Chicken)).